A 378-amino-acid chain; its full sequence is Glutamate 5-kinase (378 aa).

Residue Lys14 coordinates ATP. Ser54, Asp141, and Asn153 together coordinate substrate. An ATP-binding site is contributed by 173–174 (SD). One can recognise a PUA domain in the interval 279 to 356 (AGRLTVDAGA…DEISEILGYD (78 aa)).

The protein belongs to the glutamate 5-kinase family.

It localises to the cytoplasm. The enzyme catalyses L-glutamate + ATP = L-glutamyl 5-phosphate + ADP. It participates in amino-acid biosynthesis; L-proline biosynthesis; L-glutamate 5-semialdehyde from L-glutamate: step 1/2. Catalyzes the transfer of a phosphate group to glutamate to form L-glutamate 5-phosphate. This Brucella anthropi (strain ATCC 49188 / DSM 6882 / CCUG 24695 / JCM 21032 / LMG 3331 / NBRC 15819 / NCTC 12168 / Alc 37) (Ochrobactrum anthropi) protein is Glutamate 5-kinase.